We begin with the raw amino-acid sequence, 218 residues long: Protein GrpE (218 aa).

Residues 1 to 21 (MSDKQREAERQQSEDKAHSEA) are compositionally biased toward basic and acidic residues. A disordered region spans residues 1 to 66 (MSDKQREAER…LEEARARAEE (66 aa)). A compositionally biased stretch (low complexity) spans 24 to 36 (AEAGQAPEAQAAE).

It belongs to the GrpE family. As to quaternary structure, homodimer.

It is found in the cytoplasm. Participates actively in the response to hyperosmotic and heat shock by preventing the aggregation of stress-denatured proteins, in association with DnaK and GrpE. It is the nucleotide exchange factor for DnaK and may function as a thermosensor. Unfolded proteins bind initially to DnaJ; upon interaction with the DnaJ-bound protein, DnaK hydrolyzes its bound ATP, resulting in the formation of a stable complex. GrpE releases ADP from DnaK; ATP binding to DnaK triggers the release of the substrate protein, thus completing the reaction cycle. Several rounds of ATP-dependent interactions between DnaJ, DnaK and GrpE are required for fully efficient folding. The protein is Protein GrpE of Alkalilimnicola ehrlichii (strain ATCC BAA-1101 / DSM 17681 / MLHE-1).